A 576-amino-acid polypeptide reads, in one-letter code: SNF1-like protein kinase ssp2 (576 aa).

In terms of domain architecture, Protein kinase spans 34–285; sequence YIIRETLGEG…IQEIRRDPWF (252 aa). Residues 40 to 48 and K63 contribute to the ATP site; that span reads LGEGSFGKV. The active-site Proton acceptor is D156. T189 is subject to Phosphothreonine. The auto-inhibitory domain (AID) stretch occupies residues 292 to 348; that stretch reads YLRPMEEVQGSYADSRIVSKLGEAMGFSEDYIVEALRSDENNEVKEAYNLLHENQVI. A UBA domain is found at 304 to 345; that stretch reads ADSRIVSKLGEAMGFSEDYIVEALRSDENNEVKEAYNLLHEN. Residue S442 is modified to Phosphoserine.

It belongs to the protein kinase superfamily. CAMK Ser/Thr protein kinase family. SNF1 subfamily. Component of the AMP-activated protein kinase complex also known as the SNF1 kinase complex (Snf1c), a heterotrimeric complex composed of a catalytic subunit alpha and 2 regulatory subunits beta (amk2) and gamma (cbs2). Phosphorylation at Thr-189 by ssp1 is required for nuclear entry in nutritionally stressed cells.

It localises to the cytoplasm. The protein resides in the nucleus. The enzyme catalyses L-seryl-[protein] + ATP = O-phospho-L-seryl-[protein] + ADP + H(+). The catalysed reaction is L-threonyl-[protein] + ATP = O-phospho-L-threonyl-[protein] + ADP + H(+). In terms of biological role, serine/threonine protein kinase essential for release from glucose repression via the phosphorylation of scr1 upon glucose deprivation. Catalytic subunit of the AMP-activated protein kinase complex also known as the SNF1 kinase complex (Snf1c), a central regulator of cellular energy homeostasis, which, in response to a fall in intracellular ATP levels, activates energy-producing pathways and inhibits energy-consuming processes. The complex phosphorylates histone H3 to form H3S10ph, which promotes H3K14ac formation, leading to transcriptional activation through TBP recruitment to the promoters. Regulates proper cell cycle exit and sexual differentiation. Also regulates ste11 levels under nitrogen deprivation. The chain is SNF1-like protein kinase ssp2 from Schizosaccharomyces pombe (strain 972 / ATCC 24843) (Fission yeast).